We begin with the raw amino-acid sequence, 728 residues long: 1,4-alpha-glucan branching enzyme GlgB (728 aa).

Asp405 (nucleophile) is an active-site residue. The active-site Proton donor is the Glu458.

This sequence belongs to the glycosyl hydrolase 13 family. GlgB subfamily. In terms of assembly, monomer.

The catalysed reaction is Transfers a segment of a (1-&gt;4)-alpha-D-glucan chain to a primary hydroxy group in a similar glucan chain.. Its pathway is glycan biosynthesis; glycogen biosynthesis. Functionally, catalyzes the formation of the alpha-1,6-glucosidic linkages in glycogen by scission of a 1,4-alpha-linked oligosaccharide from growing alpha-1,4-glucan chains and the subsequent attachment of the oligosaccharide to the alpha-1,6 position. This Shigella dysenteriae serotype 1 (strain Sd197) protein is 1,4-alpha-glucan branching enzyme GlgB.